The primary structure comprises 163 residues: NADH-quinone oxidoreductase subunit I (163 aa).

2 4Fe-4S ferredoxin-type domains span residues 53–83 (LRRY…IEAG) and 94–123 (VRYD…EGPN). Positions 63, 66, 69, 73, 103, 106, 109, and 113 each coordinate [4Fe-4S] cluster.

This sequence belongs to the complex I 23 kDa subunit family. NDH-1 is composed of 14 different subunits. Subunits NuoA, H, J, K, L, M, N constitute the membrane sector of the complex. [4Fe-4S] cluster serves as cofactor.

It is found in the cell inner membrane. The enzyme catalyses a quinone + NADH + 5 H(+)(in) = a quinol + NAD(+) + 4 H(+)(out). NDH-1 shuttles electrons from NADH, via FMN and iron-sulfur (Fe-S) centers, to quinones in the respiratory chain. The immediate electron acceptor for the enzyme in this species is believed to be ubiquinone. Couples the redox reaction to proton translocation (for every two electrons transferred, four hydrogen ions are translocated across the cytoplasmic membrane), and thus conserves the redox energy in a proton gradient. This is NADH-quinone oxidoreductase subunit I from Brucella melitensis biotype 1 (strain ATCC 23456 / CCUG 17765 / NCTC 10094 / 16M).